The chain runs to 240 residues: Uridylate kinase (240 aa).

Position 13–16 (13–16) interacts with ATP; sequence KFSG. Glycine 55 is a binding site for UMP. ATP-binding residues include glycine 56 and arginine 60. UMP is bound by residues aspartate 76 and 137-144; that span reads TGNPFFTT. The ATP site is built by threonine 164, tyrosine 170, and aspartate 173.

It belongs to the UMP kinase family. Homohexamer.

It is found in the cytoplasm. The enzyme catalyses UMP + ATP = UDP + ADP. It functions in the pathway pyrimidine metabolism; CTP biosynthesis via de novo pathway; UDP from UMP (UMPK route): step 1/1. With respect to regulation, inhibited by UTP. Catalyzes the reversible phosphorylation of UMP to UDP. The chain is Uridylate kinase from Helicobacter pylori (strain J99 / ATCC 700824) (Campylobacter pylori J99).